We begin with the raw amino-acid sequence, 609 residues long: Serine/threonine-protein phosphatase 4 regulatory subunit 2 (609 aa).

The residue at position 68 (Ser-68) is a Phosphoserine. The disordered stretch occupies residues 175 to 569 (NNNGNADEGS…EEARVSPSAT (395 aa)). Residues 183–194 (GSSPGAGSAGCA) show a composition bias toward low complexity. Positions 201-225 (RSDDNDQPKAKKAKLEIDGEERSEA) are enriched in basic and acidic residues. 2 positions are modified to phosphoserine: Ser-223 and Ser-226. Basic and acidic residues predominate over residues 233–244 (VATRVKNEKDEK). Ser-252 carries the phosphoserine modification. Positions 258–270 (EIEEPDEEVDEAD) are enriched in acidic residues. Composition is skewed to basic and acidic residues over residues 310–351 (IEAE…KPDG) and 375–400 (EPVK…KQDD). Residues 401-410 (IDSTETDDAP) show a composition bias toward acidic residues. The span at 414 to 462 (KPAEEKIASSESKPKTKSEDDPEAETKKSQPEKTETEAAEKSVSDEKQA) shows a compositional bias: basic and acidic residues. The residue at position 602 (Thr-602) is a Phosphothreonine. Phosphoserine is present on Ser-603.

This sequence belongs to the PPP4R2 family. As to quaternary structure, serine/threonine-protein phosphatase 4 (PP4) occurs in different assemblies of the catalytic and one or more regulatory subunits. Probably part of a PP4 PPP4C-PPP4R2-PPP4R3 complex containing Pp4-19C, PPP4R2r and flfl.

Functionally, regulatory subunit of serine/threonine-protein phosphatase 4 (PP4). The probable PP4 complex Pp4-19C-PPP4R2r-flfl (PPP4C-PPP4R2-PPP4R3) is required to prevent caspase induced cell death (in vitro). The polypeptide is Serine/threonine-protein phosphatase 4 regulatory subunit 2 (PPP4R2r) (Drosophila melanogaster (Fruit fly)).